We begin with the raw amino-acid sequence, 319 residues long: Protein MGF 360-8L (319 aa).

The protein belongs to the asfivirus MGF 360 family.

Plays a role in virus cell tropism, and may be required for efficient virus replication in macrophages. The polypeptide is Protein MGF 360-8L (African swine fever virus (isolate Warthog/Namibia/Wart80/1980) (ASFV)).